The sequence spans 492 residues: Protein kinase US3 homolog (492 aa).

The segment at 99 to 137 (ADLHESQRGQPSGATDSQASTLETESAPPSADSSSSAKL) is disordered. Residues 106–122 (RGQPSGATDSQASTLET) are compositionally biased toward polar residues. Positions 124–135 (SAPPSADSSSSA) are enriched in low complexity. The Protein kinase domain occupies 147–446 (YRVIGTLPAG…ASELLALPLF (300 aa)). ATP is bound by residues 153 to 161 (LPAGSFGKI) and K187. D281 functions as the Proton acceptor in the catalytic mechanism.

It belongs to the protein kinase superfamily. Ser/Thr protein kinase family. In terms of processing, phosphorylated by UL13 homolog; this phosphorylation regulates subsequent phosphorylation of UL31 and UL34 homologs by US3. Autophosphorylated.

Its subcellular location is the host cytoplasm. It localises to the host nucleus. It carries out the reaction L-seryl-[protein] + ATP = O-phospho-L-seryl-[protein] + ADP + H(+). The enzyme catalyses L-threonyl-[protein] + ATP = O-phospho-L-threonyl-[protein] + ADP + H(+). Multifunctional serine/threonine kinase that plays a role in several processes including egress of virus particles from the nucleus, modulation of the actin cytoskeleton and inhibition of apoptosis. Phosphorylates UL31 and UL34 homologs, two critical regulators of capsid budding from nucleus to endoplasmic reticulum, thereby facilitating virion egress. Modulates and redistributes host components of the nuclear envelope, including LMNA, emerin/EMD and the nuclear matrix protein MATR3. Phosphorylates envelope glycoprotein B (gB), probably to direct it to the cell surface. Promotes virus intracellular spread by restructuring host cell cytoskeleton. Blocks host apoptosis to extend cell survival and allow efficient viral replication. Promotes viral gene expression by phosphorylating host HDAC2 to reduce viral genome silencing. The protein is Protein kinase US3 homolog (US3) of Amazona oratrix (yellow-headed parrot).